Here is an 870-residue protein sequence, read N- to C-terminus: Importin subunit beta-1 (870 aa).

Ala-2 carries the post-translational modification N-acetylalanine. HEAT repeat units follow at residues Glu-4–Gln-33, Leu-35–Leu-67, Met-87–Gln-126, Leu-132–Glu-161, Val-172–Leu-204, Asp-214–Thr-249, Ala-255–Gly-304, Phe-313–Gly-361, Val-365–Leu-395, Leu-403–Phe-440, Cys-456–Gly-492, Thr-498–Arg-535, Ser-542–Ile-588, Thr-596–Ala-637, Ala-642–Leu-679, Leu-684–Ile-722, Trp-730–Phe-776, and Ser-826–Ile-868. One can recognise an Importin N-terminal domain in the interval Ala-23–Ala-103.

This sequence belongs to the importin beta family. Importin beta-1 subfamily. Forms a complex with the importin subunits alpha IMPA1 or IMPA2, the nucleoporin NUP62 and the Ran-GTP-binding proteins RAN1, RAN2 or RAN3. In terms of tissue distribution, expressed in roots, cotyledons, leaves, stems, petals, stamen, stigma, siliques, embryos and guard cells.

It localises to the cytoplasm. The protein localises to the nucleus. Acts as a negative effector of drought tolerance. Involved in the regulation of stomatal closure and in the abscisic acid (ABA)-mediated pathway that lead to drought tolerance. Does not directly mediate nuclear import of ABI1 and ABI2 which are key regulators of the ABA signaling pathway. May be involved in nuclear translocation of other type 2C protein phosphatases that mediate ABA signaling. The polypeptide is Importin subunit beta-1 (Arabidopsis thaliana (Mouse-ear cress)).